Here is a 241-residue protein sequence, read N- to C-terminus: MFARGLKRKCVGHEEDVEGALAGLKTVSSYSLQRQSLLDMSLVKLQLCHMLVEPNLCRSVLIANTVRQIQEEMTQDGTWRTVAPQAAERAPLDRLVSTEILCRAAWGQEGAHPAPGLGDGHTQGPVSDLCPVTSAQAPRHLQSSAWEMDGPRENRGSFHKSLDQIFETLETKNPSCMEELFSDVDSPYYDLDTVLTGMMGGARPGPCEGLEGLAPATPGPSSSCKSDLGELDHVVEILVET.

The SERTA domain maps to 30–77 (YSLQRQSLLDMSLVKLQLCHMLVEPNLCRSVLIANTVRQIQEEMTQDG).

In terms of tissue distribution, highest levels of expression in the pancreas, thymus, testis, spleen, liver, placenta and leukocytes. Relatively low levels in the lung, kidney, prostate, ovary, small intestine and colon. Hardly detectable, if at all, in the brain, skeletal muscle and heart.

It localises to the nucleus. Its function is as follows. May participate in the regulation of cell proliferation through the E2F/RB pathway. May be involved in molecular regulation of hematopoietic stem cells and progenitor cell lineage commitment and differentiation. This Homo sapiens (Human) protein is Cell division cycle-associated protein 4 (CDCA4).